A 650-amino-acid polypeptide reads, in one-letter code: Threonine--tRNA ligase (650 aa).

Positions 3–65 (DLVKVTLPDG…ERDARLEIVT (63 aa)) constitute a TGS domain. The catalytic stretch occupies residues 248–548 (DHRRLGPQLG…LVEHYAGAFP (301 aa)). Residues cysteine 349, histidine 400, and histidine 525 each coordinate Zn(2+).

The protein belongs to the class-II aminoacyl-tRNA synthetase family. Homodimer. Requires Zn(2+) as cofactor.

It localises to the cytoplasm. The enzyme catalyses tRNA(Thr) + L-threonine + ATP = L-threonyl-tRNA(Thr) + AMP + diphosphate + H(+). Its function is as follows. Catalyzes the attachment of threonine to tRNA(Thr) in a two-step reaction: L-threonine is first activated by ATP to form Thr-AMP and then transferred to the acceptor end of tRNA(Thr). Also edits incorrectly charged L-seryl-tRNA(Thr). The protein is Threonine--tRNA ligase of Anaeromyxobacter dehalogenans (strain 2CP-1 / ATCC BAA-258).